The chain runs to 294 residues: NAD kinase (294 aa).

Catalysis depends on D74, which acts as the Proton acceptor. Residues 74–75 (DG), R79, 149–150 (NE), D179, 190–195 (TGYSMS), and A214 each bind NAD(+).

Belongs to the NAD kinase family. Requires a divalent metal cation as cofactor.

It is found in the cytoplasm. The enzyme catalyses NAD(+) + ATP = ADP + NADP(+) + H(+). In terms of biological role, involved in the regulation of the intracellular balance of NAD and NADP, and is a key enzyme in the biosynthesis of NADP. Catalyzes specifically the phosphorylation on 2'-hydroxyl of the adenosine moiety of NAD to yield NADP. The polypeptide is NAD kinase (Flavobacterium psychrophilum (strain ATCC 49511 / DSM 21280 / CIP 103535 / JIP02/86)).